We begin with the raw amino-acid sequence, 583 residues long: CTP synthase (583 aa).

Residues 1–278 (MRRHPQTATK…DAFVVRRLNL (278 aa)) are amidoligase domain. Residue S20 coordinates CTP. Residue S20 coordinates UTP. ATP-binding positions include 21-26 (SLGKGL) and D78. Mg(2+) is bound by residues D78 and E152. Residues 159–161 (DIE), 199–204 (KTKPTQ), and K235 contribute to the CTP site. UTP is bound by residues 199-204 (KTKPTQ) and K235. Residues 303-551 (RIALVGKYVE…VKAAIDYKEG (249 aa)) enclose the Glutamine amidotransferase type-1 domain. An L-glutamine-binding site is contributed by G366. Residue C393 is the Nucleophile; for glutamine hydrolysis of the active site. L-glutamine-binding positions include 394-397 (LGLQ), E416, and R477. Catalysis depends on residues H524 and E526. The tract at residues 559 to 583 (PERVSNGAERRDQVGQSIPEPANRG) is disordered.

It belongs to the CTP synthase family. Homotetramer.

The enzyme catalyses UTP + L-glutamine + ATP + H2O = CTP + L-glutamate + ADP + phosphate + 2 H(+). It catalyses the reaction L-glutamine + H2O = L-glutamate + NH4(+). It carries out the reaction UTP + NH4(+) + ATP = CTP + ADP + phosphate + 2 H(+). It participates in pyrimidine metabolism; CTP biosynthesis via de novo pathway; CTP from UDP: step 2/2. Its activity is regulated as follows. Allosterically activated by GTP, when glutamine is the substrate; GTP has no effect on the reaction when ammonia is the substrate. The allosteric effector GTP functions by stabilizing the protein conformation that binds the tetrahedral intermediate(s) formed during glutamine hydrolysis. Inhibited by the product CTP, via allosteric rather than competitive inhibition. In terms of biological role, catalyzes the ATP-dependent amination of UTP to CTP with either L-glutamine or ammonia as the source of nitrogen. Regulates intracellular CTP levels through interactions with the four ribonucleotide triphosphates. This chain is CTP synthase, found in Mycobacterium ulcerans (strain Agy99).